The chain runs to 187 residues: dTTP/UTP pyrophosphatase (187 aa).

Aspartate 65 acts as the Proton acceptor in catalysis.

It belongs to the Maf family. YhdE subfamily. It depends on a divalent metal cation as a cofactor.

The protein resides in the cytoplasm. The enzyme catalyses dTTP + H2O = dTMP + diphosphate + H(+). It carries out the reaction UTP + H2O = UMP + diphosphate + H(+). Nucleoside triphosphate pyrophosphatase that hydrolyzes dTTP and UTP. May have a dual role in cell division arrest and in preventing the incorporation of modified nucleotides into cellular nucleic acids. The protein is dTTP/UTP pyrophosphatase of Pyrococcus abyssi (strain GE5 / Orsay).